A 442-amino-acid chain; its full sequence is tRNA-2-methylthio-N(6)-dimethylallyladenosine synthase (442 aa).

The MTTase N-terminal domain occupies 2–117 (QGLYIKSYGC…LPELIIKARR (116 aa)). 6 residues coordinate [4Fe-4S] cluster: Cys-11, Cys-47, Cys-80, Cys-157, Cys-161, and Cys-164. In terms of domain architecture, Radical SAM core spans 143-374 (KNQEVSAFIS…QELLREQQLA (232 aa)). One can recognise a TRAM domain in the interval 377-442 (RNMIGQTCSV…QNSVTGIVVN (66 aa)).

Belongs to the methylthiotransferase family. MiaB subfamily. In terms of assembly, monomer. The cofactor is [4Fe-4S] cluster.

Its subcellular location is the cytoplasm. It carries out the reaction N(6)-dimethylallyladenosine(37) in tRNA + (sulfur carrier)-SH + AH2 + 2 S-adenosyl-L-methionine = 2-methylsulfanyl-N(6)-dimethylallyladenosine(37) in tRNA + (sulfur carrier)-H + 5'-deoxyadenosine + L-methionine + A + S-adenosyl-L-homocysteine + 2 H(+). Its function is as follows. Catalyzes the methylthiolation of N6-(dimethylallyl)adenosine (i(6)A), leading to the formation of 2-methylthio-N6-(dimethylallyl)adenosine (ms(2)i(6)A) at position 37 in tRNAs that read codons beginning with uridine. This is tRNA-2-methylthio-N(6)-dimethylallyladenosine synthase from Ehrlichia chaffeensis (strain ATCC CRL-10679 / Arkansas).